Here is a 280-residue protein sequence, read N- to C-terminus: Sulfur carrier protein FdhD (280 aa).

The active-site Cysteine persulfide intermediate is the Cys121. Residue 258 to 263 (FSRPGR) coordinates Mo-bis(molybdopterin guanine dinucleotide).

Belongs to the FdhD family.

Its subcellular location is the cytoplasm. Functionally, required for formate dehydrogenase (FDH) activity. Acts as a sulfur carrier protein that transfers sulfur from IscS to the molybdenum cofactor prior to its insertion into FDH. This Cronobacter sakazakii (strain ATCC BAA-894) (Enterobacter sakazakii) protein is Sulfur carrier protein FdhD.